The sequence spans 526 residues: Nitrogenase iron-iron protein alpha chain (526 aa).

Positions 49, 75, and 138 each coordinate [8Fe-7S] cluster. The [8Fe-9S-C-homocitryl] cluster site is built by C257 and H423. Positions 507 to 526 (RNQPMPPSRKLRDAVQPAAE) are disordered.

Belongs to the NifD/NifK/NifE/NifN family. As to quaternary structure, hexamer of two alpha, two beta, and two delta chains. It depends on [8Fe-7S] cluster as a cofactor. The cofactor is [8Fe-9S-C-homocitryl] cluster.

It catalyses the reaction N2 + 8 reduced [2Fe-2S]-[ferredoxin] + 16 ATP + 16 H2O = H2 + 8 oxidized [2Fe-2S]-[ferredoxin] + 2 NH4(+) + 16 ADP + 16 phosphate + 6 H(+). Functionally, this iron-iron protein is part of the nitrogenase complex that catalyzes the key enzymatic reactions in nitrogen fixation. Other nitrogenase complexes utilize a molybdenum-iron protein or a vanadium-iron protein. The sequence is that of Nitrogenase iron-iron protein alpha chain (anfD) from Rhodobacter capsulatus (Rhodopseudomonas capsulata).